The chain runs to 89 residues: Small ribosomal subunit protein uS15 (89 aa).

It belongs to the universal ribosomal protein uS15 family. As to quaternary structure, part of the 30S ribosomal subunit. Forms a bridge to the 50S subunit in the 70S ribosome, contacting the 23S rRNA.

Functionally, one of the primary rRNA binding proteins, it binds directly to 16S rRNA where it helps nucleate assembly of the platform of the 30S subunit by binding and bridging several RNA helices of the 16S rRNA. Its function is as follows. Forms an intersubunit bridge (bridge B4) with the 23S rRNA of the 50S subunit in the ribosome. In Streptococcus pyogenes serotype M1, this protein is Small ribosomal subunit protein uS15.